The following is a 211-amino-acid chain: Large ribosomal subunit protein bL9 (211 aa).

Residues 183–211 form a disordered region; it reads AAASEDEELAETAGVAPAEPSEEDDSAKA. The span at 202-211 shows a compositional bias: acidic residues; that stretch reads PSEEDDSAKA.

This sequence belongs to the bacterial ribosomal protein bL9 family.

Functionally, binds to the 23S rRNA. The protein is Large ribosomal subunit protein bL9 of Roseobacter denitrificans (strain ATCC 33942 / OCh 114) (Erythrobacter sp. (strain OCh 114)).